Here is a 691-residue protein sequence, read N- to C-terminus: DNA ligase (691 aa).

NAD(+)-binding positions include 41-45 (DAEYD), 90-91 (SL), and E130. Residue K132 is the N6-AMP-lysine intermediate of the active site. Positions 153, 190, 307, and 331 each coordinate NAD(+). 4 residues coordinate Zn(2+): C425, C428, C443, and C449. One can recognise a BRCT domain in the interval 610–691 (APQGVLAGKT…MHTLLEGHAR (82 aa)).

The protein belongs to the NAD-dependent DNA ligase family. LigA subfamily. Mg(2+) serves as cofactor. Mn(2+) is required as a cofactor.

It carries out the reaction NAD(+) + (deoxyribonucleotide)n-3'-hydroxyl + 5'-phospho-(deoxyribonucleotide)m = (deoxyribonucleotide)n+m + AMP + beta-nicotinamide D-nucleotide.. In terms of biological role, DNA ligase that catalyzes the formation of phosphodiester linkages between 5'-phosphoryl and 3'-hydroxyl groups in double-stranded DNA using NAD as a coenzyme and as the energy source for the reaction. It is essential for DNA replication and repair of damaged DNA. The chain is DNA ligase from Burkholderia mallei (strain NCTC 10247).